Consider the following 825-residue polypeptide: Breast cancer anti-estrogen resistance protein 3 homolog (825 aa).

A2 carries the post-translational modification N-acetylalanine. A disordered region spans residues 31–93 (KSPLTEHRPD…PVTQDSIQES (63 aa)). A phosphoserine mark is found at S32, S78, S83, S182, and S290. The span at 75 to 93 (HSKSPQQNSPVTQDSIQES) shows a compositional bias: polar residues. One can recognise an SH2 domain in the interval 154–253 (WYHGRIPRQV…QSGAIIFQPI (100 aa)). The residue at position 334 (K334) is an N6-methyllysine. Phosphoserine occurs at positions 358, 363, and 375. Position 442 is an omega-N-methylarginine (R442). At S471 the chain carries Phosphoserine. In terms of domain architecture, Ras-GEF spans 548-818 (DPKVIAQHIL…TALSRKLEPP (271 aa)). A mediates the interaction with BCAR1/p130CAS region spans residues 744-748 (LATAR).

Part of a complex comprised of PTPRA, BCAR1, BCAR3 (via SH2 domain) and SRC; the formation of the complex is dependent on integrin mediated-tyrosine phosphorylation of PTPRA. Within the complex, interacts (via SH2 domain) with PTPRA (when phosphorylated on 'Tyr-798'). Interacts (via Ras-GEF domain) with BCAR1. Interacts (via Ras-GEF domain) with NEDD9. Interacts with PTK2/FAK1. Interacts with PTPN1. Interacts (via SH2 domain) with EGFR (when tyrosine-phosphorylated). Phosphorylated on tyrosine residues.

It localises to the cytoplasm. The protein resides in the cell junction. Its subcellular location is the focal adhesion. In terms of biological role, acts as an adapter protein downstream of several growth factor receptors to promote cell proliferation, migration, and redistribution of actin fibers. Specifically involved in INS/insulin signaling pathway by mediating MAPK1/ERK2-MAPK3/ERK1 activation and DNA synthesis. Promotes insulin-mediated membrane ruffling. In response to vasoconstrictor peptide EDN1, involved in the activation of RAP1 downstream of PTK2B via interaction with phosphorylated BCAR1. Inhibits cell migration and invasion via regulation of TGFB-mediated matrix digestion, actin filament rearrangement, and inhibition of invadopodia activity. May inhibit TGFB-SMAD signaling, via facilitating BCAR1 and SMAD2 and/or SMAD3 interaction. Regulates EGF-induced DNA synthesis. Required for the maintenance of ocular lens morphology and structural integrity, potentially via regulation of focal adhesion complex signaling. Acts upstream of PTPRA to regulate the localization of BCAR1 and PTPRA to focal adhesions, via regulation of SRC-mediated phosphorylation of PTPRA. Positively regulates integrin-induced tyrosine phosphorylation of BCAR1. Acts as a guanine nucleotide exchange factor (GEF) for small GTPases RALA, RAP1A and RRAS. However, in a contrasting study, lacks GEF activity towards RAP1. This is Breast cancer anti-estrogen resistance protein 3 homolog (BCAR3) from Macaca fascicularis (Crab-eating macaque).